The primary structure comprises 339 residues: MDHEADAYRTDLMTITRYVLNEQSRNPEARGDLTILLSHIVLGCKFVASAVNKAGLAKLIGLAGETNVQGEEQKKLDVLSNEVFVKALVSSGRTCVLVSEEDEEATFVDPALRGKYCVCFDPLDGSSNIDCGVSIGTIFGIYMIKDKENVTLEDVLQPGKNMVAAGYCMYGSSCTLVLSTGNGVNGFTLDPSLGEFILTHPDIKIPKKGKIYSVNEGNAKNWDEPTAKFVEKCKFPKDGSSPKSLRYIGSMVADVHRTLLYGGVFLYPADKKSPNGKLRVLYEVFPMSFLMEQAGGQSFTGKERALDLVPTKIHERSPIFLGSFEDVEEIKGLYAAQAK.

Glutamate 71, glutamate 100, aspartate 121, leucine 123, and aspartate 124 together coordinate Mg(2+). Substrate contacts are provided by residues 124-127 (DGSS), asparagine 215, tyrosine 247, tyrosine 267, and lysine 277. Glutamate 283 provides a ligand contact to Mg(2+).

Belongs to the FBPase class 1 family. Mg(2+) serves as cofactor.

It is found in the cytoplasm. The enzyme catalyses beta-D-fructose 1,6-bisphosphate + H2O = beta-D-fructose 6-phosphate + phosphate. This is Fructose-1,6-bisphosphatase, cytosolic from Oryza sativa subsp. indica (Rice).